The chain runs to 123 residues: Nitrogen regulatory protein GlnK2 (123 aa).

Residues 38–40 (SLT) and serine 49 each bind ATP. An ADP-binding site is contributed by serine 49. Tyrosine 62 carries the post-translational modification O-UMP-tyrosine. ATP is bound by residues valine 75, 98 to 101 (GDGK), and arginine 114. ADP is bound at residue 98-101 (GDGK). 98-101 (GDGK) is a binding site for AMP.

The protein belongs to the P(II) protein family. In terms of assembly, homotrimer. Interacts with the glutamine synthetase 3 (GS3) in the presence of 2-oxoglutarate. Interacts in vitro with Amt1 after ammonium shock. May also interact with Amt2. Post-translationally, uridylylated on Tyr-62.

It is found in the cytoplasm. Binds the effectors ADP and ATP. Also binds AMP with high affinity, raising the possibility that AMP could be an important PII effector, at least in archaea. The change in the ATP/AMP ratio may be more relevant for describing the energy status in the cells than the ATP/ADP ratio alone. Its function is as follows. Involved in the regulation of nitrogen metabolism. Regulates the activity of its targets by protein-protein interaction in response to the nitrogen status of the cell. Increases the activity of the glutamine synthetase 3 in the presence of 2-oxoglutarate. May regulate the activity of the ammonia channel Amt2 via direct interaction. This is Nitrogen regulatory protein GlnK2 from Haloferax mediterranei (strain ATCC 33500 / DSM 1411 / JCM 8866 / NBRC 14739 / NCIMB 2177 / R-4) (Halobacterium mediterranei).